A 138-amino-acid chain; its full sequence is Thyrotropin subunit beta (138 aa).

An N-terminal signal peptide occupies residues 1 to 20 (MTAIFLMSMLFGLACGQAMS). Disulfide bonds link C22–C72, C36–C87, C39–C125, C47–C103, C51–C105, and C108–C115. N-linked (GlcNAc...) asparagine glycosylation occurs at N43. A propeptide spanning residues 133–138 (VLEFSI) is cleaved from the precursor.

The protein belongs to the glycoprotein hormones subunit beta family. Heterodimer of a common alpha chain and a unique beta chain which confers biological specificity to thyrotropin, lutropin, follitropin and gonadotropin.

The protein resides in the secreted. In terms of biological role, indispensable for the control of thyroid structure and metabolism. This Sus scrofa (Pig) protein is Thyrotropin subunit beta (TSHB).